Here is a 986-residue protein sequence, read N- to C-terminus: P3N-PIPO polyprotein (986 aa).

Residues 141–284 (KLTEGQMNHL…QGVMDSMVQF (144 aa)) enclose the Peptidase S30 domain. Catalysis depends on for P1 proteinase activity residues histidine 192, aspartate 201, and serine 235. Positions 334 to 337 (KITC) match the Involved in interaction with stylet and aphid transmission motif. Residues 592–594 (PTK) carry the Involved in virions binding and aphid transmission motif. The 123-residue stretch at 618-740 (LYIARQGFCY…ESDIKHYRVG (123 aa)) folds into the Peptidase C6 domain. Residues cysteine 626 and histidine 699 each act as for helper component proteinase activity in the active site.

The protein belongs to the potyviridae P3N-PIPO polyprotein family. Interacts (via PIPO domain) with host PCaP1 protein; this interaction may help to anchor the movement complex to the plasma membrane from which the complex could move to the plasmodesmata. In terms of processing, potyviral RNA is expressed as two polyproteins which undergo post-translational proteolytic processing. Genome polyprotein is processed by NIa-pro, P1 and HC-pro proteinases resulting in the production of at least ten individual proteins. P3N-PIPO is cleaved by P1 and HC-pro proteinases resulting in the production of three individual proteins. The P1 proteinase and the HC-pro cleave only their respective C-termini autocatalytically.

It localises to the host cell junction. The protein localises to the host plasmodesma. The catalysed reaction is Hydrolyzes a Gly-|-Gly bond at its own C-terminus, commonly in the sequence -Tyr-Xaa-Val-Gly-|-Gly, in the processing of the potyviral polyprotein.. Its function is as follows. Required for aphid transmission and also has proteolytic activity. Only cleaves a Gly-Gly dipeptide at its own C-terminus. Interacts with virions and aphid stylets. Acts as a suppressor of RNA-mediated gene silencing, also known as post-transcriptional gene silencing (PTGS), a mechanism of plant viral defense that limits the accumulation of viral RNAs. May have RNA-binding activity. Functionally, allows efficient cell to cell propagation, by bypassing the host cell wall barrier. Transports viral genome to neighboring plant cells directly through plasmosdesmata, without any budding. This is P3N-PIPO polyprotein from Capsicum (peppers).